The following is a 210-amino-acid chain: Glutathione S-transferase P 2 (210 aa).

The GST N-terminal domain maps to 2–81; it reads PPYTIVYFPS…HLGRSLGLYG (80 aa). Glutathione contacts are provided by residues Y8, R14, W39, K45, 52–53, and 65–66; these read QL and QS. One can recognise a GST C-terminal domain in the interval 83-204; it reads NQREAAQVDM…SSPEHVNRPI (122 aa).

Belongs to the GST superfamily. Pi family. In terms of assembly, homodimer. In terms of tissue distribution, selectively expressed in gall bladder, colon, heart, and skeletal muscle.

The enzyme catalyses RX + glutathione = an S-substituted glutathione + a halide anion + H(+). Conjugation of reduced glutathione to a wide number of exogenous and endogenous hydrophobic electrophiles. Cannot metabolize 1-chloro-2,4-dinitrobenzene. In Mus musculus (Mouse), this protein is Glutathione S-transferase P 2 (Gstp2).